Consider the following 493-residue polypeptide: Cobyric acid synthase (493 aa).

The GATase cobBQ-type domain occupies Pro252–Leu440. The active-site Nucleophile is the Cys333. His432 is a catalytic residue.

It belongs to the CobB/CobQ family. CobQ subfamily.

It participates in cofactor biosynthesis; adenosylcobalamin biosynthesis. Functionally, catalyzes amidations at positions B, D, E, and G on adenosylcobyrinic A,C-diamide. NH(2) groups are provided by glutamine, and one molecule of ATP is hydrogenolyzed for each amidation. The chain is Cobyric acid synthase from Thermodesulfovibrio yellowstonii (strain ATCC 51303 / DSM 11347 / YP87).